A 297-amino-acid chain; its full sequence is D-alanine--D-alanine ligase (297 aa).

In terms of domain architecture, ATP-grasp spans 103–293 (KEILMHHRMP…FDSFVKSILE (191 aa)). 129-180 (ISFPVAVKPSSGGSSIATFKVKSLEELENAYQQASKHGEVMIEQWVTGKEIT) serves as a coordination point for ATP. Positions 247, 260, and 262 each coordinate Mg(2+).

Belongs to the D-alanine--D-alanine ligase family. Mg(2+) is required as a cofactor. It depends on Mn(2+) as a cofactor.

It localises to the cytoplasm. It carries out the reaction 2 D-alanine + ATP = D-alanyl-D-alanine + ADP + phosphate + H(+). It participates in cell wall biogenesis; peptidoglycan biosynthesis. In terms of biological role, cell wall formation. This Francisella philomiragia subsp. philomiragia (strain ATCC 25017 / CCUG 19701 / FSC 153 / O#319-036) protein is D-alanine--D-alanine ligase.